A 444-amino-acid polypeptide reads, in one-letter code: Signal recognition particle 54 kDa protein (444 aa).

GTP-binding positions include glycine 102 to threonine 109, aspartate 184 to arginine 188, and serine 244 to aspartate 247.

This sequence belongs to the GTP-binding SRP family. SRP54 subfamily. In terms of assembly, part of the signal recognition particle protein translocation system, which is composed of SRP and FtsY. Archaeal SRP consists of a 7S RNA molecule of 300 nucleotides and two protein subunits: SRP54 and SRP19.

Its subcellular location is the cytoplasm. The enzyme catalyses GTP + H2O = GDP + phosphate + H(+). Functionally, involved in targeting and insertion of nascent membrane proteins into the cytoplasmic membrane. Binds to the hydrophobic signal sequence of the ribosome-nascent chain (RNC) as it emerges from the ribosomes. The SRP-RNC complex is then targeted to the cytoplasmic membrane where it interacts with the SRP receptor FtsY. The chain is Signal recognition particle 54 kDa protein from Sulfolobus acidocaldarius (strain ATCC 33909 / DSM 639 / JCM 8929 / NBRC 15157 / NCIMB 11770).